The following is a 240-amino-acid chain: tRNA (guanine-N(1)-)-methyltransferase (240 aa).

Residues Gly-110 and 130-135 (VGDYVL) each bind S-adenosyl-L-methionine.

Belongs to the RNA methyltransferase TrmD family. In terms of assembly, homodimer.

The protein resides in the cytoplasm. It carries out the reaction guanosine(37) in tRNA + S-adenosyl-L-methionine = N(1)-methylguanosine(37) in tRNA + S-adenosyl-L-homocysteine + H(+). In terms of biological role, specifically methylates guanosine-37 in various tRNAs. This Borrelia recurrentis (strain A1) protein is tRNA (guanine-N(1)-)-methyltransferase.